The sequence spans 479 residues: MTKEQILAEHIIDAVGGIDNMDNIINCMTRVRIKVLDEDKIDYEQLKSIKGVMGVVKDDRVQVVVGPGTVNKVASHMSELSGAPLGETIKHKSKDYRANAEAQAQANKSEFQSKQKRGKFNKLLKTIANIFIPLIPAFIGAGLIGGIAAVLSNLLAAGQISGEWVTQLVTVFNVIKDGMLAYLAIFTGINAAKEFGATPGLGGVIGGTTLLTGLTDKNMITNIFTGEPLQPGQGGIIGVIFAVWLLSIIEKRLHKIVPNSIDIIVTPTITLFIIGLLTIFIFMPLAGFVSDGLVTVINGIIDIGGVFSGFIIGAFFLPLVMLGLHHMFTPIHIEMINQTGATYLLPIAAMAGAGQVGAALALWVRCRKNTTLRDTLKGALPVGFLGIGEPLIYGVTLPLGKPFITACIGGGIGGAVIGGIGHIGATAIGPSGISLLPLISDHMYLGYIAGLLVAYAGGFIFTYFFGTTKAMRESDTLGD.

Residues 5–87 (QILAEHIIDA…SELSGAPLGE (83 aa)) enclose the PTS EIIB type-1 domain. The active-site Phosphocysteine intermediate; for EIIB activity is the cysteine 27. Residues 125–479 (KTIANIFIPL…AMRESDTLGD (355 aa)) form the PTS EIIC type-1 domain. A run of 10 helical transmembrane segments spans residues 130–150 (IFIPLIPAFIGAGLIGGIAAV), 169–189 (VTVFNVIKDGMLAYLAIFTGI), 195–215 (FGATPGLGGVIGGTTLLTGLT), 229–249 (LQPGQGGIIGVIFAVWLLSII), 269–289 (ITLFIIGLLTIFIFMPLAGFV), 303–323 (IGGVFSGFIIGAFFLPLVMLG), 344–364 (LLPIAAMAGAGQVGAALALWV), 379–399 (ALPVGFLGIGEPLIYGVTLPL), 403–423 (FITACIGGGIGGAVIGGIGHI), and 445–465 (LGYIAGLLVAYAGGFIFTYFF).

Its subcellular location is the cell membrane. The catalysed reaction is N-acetyl-beta-D-muramate-(1-&gt;4)-N-acetyl-D-glucosamine(out) + N(pros)-phospho-L-histidyl-[protein] = 6-phospho-N-acetyl-beta-D-muramate-(1-&gt;4)-N-acetyl-D-glucosamine(in) + L-histidyl-[protein]. It functions in the pathway cell wall biogenesis; peptidoglycan recycling. Functionally, the phosphoenolpyruvate-dependent sugar phosphotransferase system (sugar PTS), a major carbohydrate active transport system, catalyzes the phosphorylation of incoming sugar substrates concomitantly with their translocation across the cell membrane. This system is involved in the uptake and phosphorylation of MurNAc-GlcNAc, the principle peptidoglycan turnover product of S.aureus, yielding cytoplasmic MurNAc 6P-GlcNAc. This Staphylococcus saprophyticus subsp. saprophyticus (strain ATCC 15305 / DSM 20229 / NCIMB 8711 / NCTC 7292 / S-41) protein is PTS system MurNAc-GlcNAc-specific EIIBC component.